The chain runs to 48 residues: Cathepsin B (48 aa).

This sequence belongs to the peptidase C1 family. As to quaternary structure, dimer of a heavy chain and a light chain cross-linked by a disulfide bond.

The protein localises to the lysosome. The enzyme catalyses Hydrolysis of proteins with broad specificity for peptide bonds. Preferentially cleaves -Arg-Arg-|-Xaa bonds in small molecule substrates (thus differing from cathepsin L). In addition to being an endopeptidase, shows peptidyl-dipeptidase activity, liberating C-terminal dipeptides.. Its function is as follows. Thiol protease which is believed to participate in intracellular degradation and turnover of proteins. Has also been implicated in tumor invasion and metastasis. The sequence is that of Cathepsin B (CTSB) from Coturnix japonica (Japanese quail).